Reading from the N-terminus, the 368-residue chain is ICEBs1 integrase (368 aa).

Positions 61 to 143 constitute a Core-binding (CB) domain; it reads VSFPTLISIY…SLSKIFDTAV (83 aa). In terms of domain architecture, Tyr recombinase spans 164–362; the sequence is KKMKFWRPEE…YPNKQKEMAD (199 aa). Catalysis depends on residues Arg-201, Lys-239, His-313, Arg-316, and His-339. The active-site O-(3'-phospho-DNA)-tyrosine intermediate is Tyr-349.

This sequence belongs to the 'phage' integrase family.

In terms of biological role, putative integrase that is involved in the insertion of the integrative and conjugative element ICEBs1. Required for the excision of ICEBs1 from the donor cell genome and subsequent integration in the recipient cell genome. Appears not to be transferred through the mating pore. Integration of ICEBs1 involves an attachment site in the chromosome, attB, and a site in the circular form of ICEBs1, attICEBs1. The sequence is that of ICEBs1 integrase (int) from Bacillus subtilis (strain 168).